The primary structure comprises 239 residues: ATP-dependent dethiobiotin synthetase BioD (239 aa).

Glu15–Phe20 is an ATP binding site. Thr19 contacts Mg(2+). Residue Lys40 is part of the active site. Residues Asp57, Glu118–Gly121, and Asn178–His179 contribute to the ATP site. Mg(2+) is bound by residues Asp57 and Glu118.

The protein belongs to the dethiobiotin synthetase family. In terms of assembly, homodimer. It depends on Mg(2+) as a cofactor.

It is found in the cytoplasm. The enzyme catalyses (7R,8S)-7,8-diammoniononanoate + CO2 + ATP = (4R,5S)-dethiobiotin + ADP + phosphate + 3 H(+). It participates in cofactor biosynthesis; biotin biosynthesis; biotin from 7,8-diaminononanoate: step 1/2. Catalyzes a mechanistically unusual reaction, the ATP-dependent insertion of CO2 between the N7 and N8 nitrogen atoms of 7,8-diaminopelargonic acid (DAPA, also called 7,8-diammoniononanoate) to form a ureido ring. In Burkholderia cenocepacia (strain ATCC BAA-245 / DSM 16553 / LMG 16656 / NCTC 13227 / J2315 / CF5610) (Burkholderia cepacia (strain J2315)), this protein is ATP-dependent dethiobiotin synthetase BioD.